A 160-amino-acid chain; its full sequence is Large ribosomal subunit protein uL13 (160 aa).

Belongs to the universal ribosomal protein uL13 family. As to quaternary structure, part of the 50S ribosomal subunit.

Functionally, this protein is one of the early assembly proteins of the 50S ribosomal subunit, although it is not seen to bind rRNA by itself. It is important during the early stages of 50S assembly. This Orientia tsutsugamushi (strain Boryong) (Rickettsia tsutsugamushi) protein is Large ribosomal subunit protein uL13.